Reading from the N-terminus, the 261-residue chain is 3-methyl-2-oxobutanoate hydroxymethyltransferase (261 aa).

Positions 47 and 86 each coordinate Mg(2+). Residues 47–48 (DS), aspartate 86, and lysine 116 each bind 3-methyl-2-oxobutanoate. Glutamate 118 serves as a coordination point for Mg(2+). Residue glutamate 186 is the Proton acceptor of the active site.

The protein belongs to the PanB family. Homodecamer; pentamer of dimers. It depends on Mg(2+) as a cofactor.

The protein resides in the cytoplasm. It catalyses the reaction 3-methyl-2-oxobutanoate + (6R)-5,10-methylene-5,6,7,8-tetrahydrofolate + H2O = 2-dehydropantoate + (6S)-5,6,7,8-tetrahydrofolate. Its pathway is cofactor biosynthesis; (R)-pantothenate biosynthesis; (R)-pantoate from 3-methyl-2-oxobutanoate: step 1/2. Functionally, catalyzes the reversible reaction in which hydroxymethyl group from 5,10-methylenetetrahydrofolate is transferred onto alpha-ketoisovalerate to form ketopantoate. In Thermosynechococcus vestitus (strain NIES-2133 / IAM M-273 / BP-1), this protein is 3-methyl-2-oxobutanoate hydroxymethyltransferase.